Consider the following 407-residue polypeptide: Indoleamine 2,3-dioxygenase 2 (407 aa).

Histidine 347 serves as a coordination point for heme.

This sequence belongs to the indoleamine 2,3-dioxygenase family. Heme serves as cofactor. Detected in liver, small intestine, spleen, placenta, thymus, lung, brain, kidney, and colon. Also expressed at low level in testis and thyroid. Not expressed in the majority of human tumor samples (&gt;99%).

The enzyme catalyses L-tryptophan + O2 = N-formyl-L-kynurenine. The protein operates within amino-acid degradation; L-tryptophan degradation via kynurenine pathway; L-kynurenine from L-tryptophan: step 1/2. Activity is inhibited by D-1MT (1-methyl-D-tryptophan) and MTH-trp (methylthiohydantoin-DL-tryptophan) but not L-1MT (1-methyl-L-tryptophan). Its function is as follows. Catalyzes the first and rate limiting step of the catabolism of the essential amino acid tryptophan along the kynurenine pathway. Involved in immune regulation. May not play a significant role in tryptophan-related tumoral resistance. This Homo sapiens (Human) protein is Indoleamine 2,3-dioxygenase 2.